A 417-amino-acid chain; its full sequence is Gamma-glutamyl phosphate reductase (417 aa).

The protein belongs to the gamma-glutamyl phosphate reductase family.

Its subcellular location is the cytoplasm. The catalysed reaction is L-glutamate 5-semialdehyde + phosphate + NADP(+) = L-glutamyl 5-phosphate + NADPH + H(+). Its pathway is amino-acid biosynthesis; L-proline biosynthesis; L-glutamate 5-semialdehyde from L-glutamate: step 2/2. In terms of biological role, catalyzes the NADPH-dependent reduction of L-glutamate 5-phosphate into L-glutamate 5-semialdehyde and phosphate. The product spontaneously undergoes cyclization to form 1-pyrroline-5-carboxylate. The polypeptide is Gamma-glutamyl phosphate reductase (Polynucleobacter asymbioticus (strain DSM 18221 / CIP 109841 / QLW-P1DMWA-1) (Polynucleobacter necessarius subsp. asymbioticus)).